A 224-amino-acid polypeptide reads, in one-letter code: MKVSLLLLALVLVCLVQGSESWRLRRTLRRIGRGIRRVGRVVKNVACNHACPRLCRQGVCKLACNLGCRGKRDVTQQLNQQGHVTPIPNSFAAYDMNEDGIISRKELALAIGEDIAHPDFMKAYSIADVDGDGELSPKEFYNGPYVFEMDLNDDDLAYCRYRLDIDDDLIDVIEGELVNQAPNFIEGNQVKETGKPHEIISKTGQPETKPIDKYVKLAEKTKTQ.

The N-terminal stretch at 1 to 21 (MKVSLLLLALVLVCLVQGSES) is a signal peptide. In terms of domain architecture, EF-hand spans 115–150 (IAHPDFMKAYSIADVDGDGELSPKEFYNGPYVFEMD). Residues D128, D130, D132, E134, and E139 each coordinate Ca(2+).

Component of the acid-soluble organic matrix of calcified layers of the shell (at protein level).

The protein resides in the secreted. This Lottia gigantea (Giant owl limpet) protein is EF-hand calcium-binding domain-containing protein 1.